The sequence spans 231 residues: Dihydropteridine reductase (231 aa).

Residue 6 to 30 (LVLGGSGALGAEVVKFFKSKSWNTI) coordinates NADP(+). Tyrosine 138 acts as the Proton acceptor in catalysis.

Belongs to the short-chain dehydrogenases/reductases (SDR) family. Homodimer.

The catalysed reaction is 5,6,7,8-tetrahydropteridine + NAD(+) = 6,7-dihydropteridine + NADH + H(+). It carries out the reaction 5,6,7,8-tetrahydropteridine + NADP(+) = 6,7-dihydropteridine + NADPH + H(+). The product of this enzyme, tetrahydrobiopterin (BH-4), is an essential cofactor for phenylalanine, tyrosine, and tryptophan hydroxylases. This Dictyostelium discoideum (Social amoeba) protein is Dihydropteridine reductase (qdpr).